The following is a 203-amino-acid chain: Ribonuclease HII (203 aa).

Residues 15-201 (LLVAGLDEAG…VAQAPLRFPE (187 aa)) enclose the RNase H type-2 domain. A divalent metal cation contacts are provided by D21, E22, and D111.

The protein belongs to the RNase HII family. Mn(2+) serves as cofactor. The cofactor is Mg(2+).

Its subcellular location is the cytoplasm. The catalysed reaction is Endonucleolytic cleavage to 5'-phosphomonoester.. Its function is as follows. Endonuclease that specifically degrades the RNA of RNA-DNA hybrids. This is Ribonuclease HII from Thermus thermophilus (strain ATCC BAA-163 / DSM 7039 / HB27).